The primary structure comprises 700 residues: Elongation factor G (700 aa).

Positions 8–290 (ERYRNIGISA…AVIDYLPAPT (283 aa)) constitute a tr-type G domain. Residues 17–24 (AHIDAGKT), 88–92 (DTPGH), and 142–145 (NKMD) each bind GTP.

It belongs to the TRAFAC class translation factor GTPase superfamily. Classic translation factor GTPase family. EF-G/EF-2 subfamily.

The protein localises to the cytoplasm. Its function is as follows. Catalyzes the GTP-dependent ribosomal translocation step during translation elongation. During this step, the ribosome changes from the pre-translocational (PRE) to the post-translocational (POST) state as the newly formed A-site-bound peptidyl-tRNA and P-site-bound deacylated tRNA move to the P and E sites, respectively. Catalyzes the coordinated movement of the two tRNA molecules, the mRNA and conformational changes in the ribosome. In Glaesserella parasuis serovar 5 (strain SH0165) (Haemophilus parasuis), this protein is Elongation factor G.